A 124-amino-acid polypeptide reads, in one-letter code: Ribonuclease pancreatic (124 aa).

Residues 1 to 13 (KESAAAKFERQHM) are compositionally biased toward basic and acidic residues. The segment at 1–25 (KESAAAKFERQHMDPSPSSASSSNY) is disordered. Residues lysine 7 and arginine 10 each contribute to the substrate site. The active-site Proton acceptor is the histidine 12. Cystine bridges form between cysteine 26-cysteine 84, cysteine 40-cysteine 95, cysteine 58-cysteine 110, and cysteine 65-cysteine 72. Residue asparagine 34 is glycosylated (N-linked (GlcNAc...) asparagine; partial). Substrate contacts are provided by residues 41 to 45 (KPVNT), lysine 66, and arginine 85. Residue histidine 119 is the Proton donor of the active site.

This sequence belongs to the pancreatic ribonuclease family. Monomer. Interacts with and forms tight 1:1 complexes with RNH1. Dimerization of two such complexes may occur. Interaction with RNH1 inhibits this protein. As to expression, pancreas.

The protein localises to the secreted. It carries out the reaction an [RNA] containing cytidine + H2O = an [RNA]-3'-cytidine-3'-phosphate + a 5'-hydroxy-ribonucleotide-3'-[RNA].. The enzyme catalyses an [RNA] containing uridine + H2O = an [RNA]-3'-uridine-3'-phosphate + a 5'-hydroxy-ribonucleotide-3'-[RNA].. Its function is as follows. Endonuclease that catalyzes the cleavage of RNA on the 3' side of pyrimidine nucleotides. Acts on single-stranded and double-stranded RNA. This is Ribonuclease pancreatic (RNASE1) from Capreolus capreolus (European roe deer).